The primary structure comprises 306 residues: UDP-3-O-acyl-N-acetylglucosamine deacetylase (306 aa).

The Zn(2+) site is built by His79, His238, and Asp242. The active-site Proton donor is His265.

It belongs to the LpxC family. Zn(2+) serves as cofactor.

The enzyme catalyses a UDP-3-O-[(3R)-3-hydroxyacyl]-N-acetyl-alpha-D-glucosamine + H2O = a UDP-3-O-[(3R)-3-hydroxyacyl]-alpha-D-glucosamine + acetate. Its pathway is glycolipid biosynthesis; lipid IV(A) biosynthesis; lipid IV(A) from (3R)-3-hydroxytetradecanoyl-[acyl-carrier-protein] and UDP-N-acetyl-alpha-D-glucosamine: step 2/6. Its function is as follows. Catalyzes the hydrolysis of UDP-3-O-myristoyl-N-acetylglucosamine to form UDP-3-O-myristoylglucosamine and acetate, the committed step in lipid A biosynthesis. The protein is UDP-3-O-acyl-N-acetylglucosamine deacetylase of Shewanella pealeana (strain ATCC 700345 / ANG-SQ1).